We begin with the raw amino-acid sequence, 175 residues long: ATP synthase subunit b (175 aa).

The chain crosses the membrane as a helical span at residues 20-40 (LIFWTAVTFVIVLVILKKIAW).

It belongs to the ATPase B chain family. As to quaternary structure, F-type ATPases have 2 components, F(1) - the catalytic core - and F(0) - the membrane proton channel. F(1) has five subunits: alpha(3), beta(3), gamma(1), delta(1), epsilon(1). F(0) has four main subunits: a(1), b(2) and c(10-14). The alpha and beta chains form an alternating ring which encloses part of the gamma chain. F(1) is attached to F(0) by a central stalk formed by the gamma and epsilon chains, while a peripheral stalk is formed by the delta and b chains.

It is found in the cell inner membrane. In terms of biological role, f(1)F(0) ATP synthase produces ATP from ADP in the presence of a proton or sodium gradient. F-type ATPases consist of two structural domains, F(1) containing the extramembraneous catalytic core and F(0) containing the membrane proton channel, linked together by a central stalk and a peripheral stalk. During catalysis, ATP synthesis in the catalytic domain of F(1) is coupled via a rotary mechanism of the central stalk subunits to proton translocation. Component of the F(0) channel, it forms part of the peripheral stalk, linking F(1) to F(0). This is ATP synthase subunit b from Chlorobaculum parvum (strain DSM 263 / NCIMB 8327) (Chlorobium vibrioforme subsp. thiosulfatophilum).